The sequence spans 160 residues: Protein YpjC (160 aa).

This chain is Protein YpjC (ypjC), found in Escherichia coli (strain K12).